The sequence spans 923 residues: Helicase POLQ-like (923 aa).

The tract at residues 1–84 is disordered; the sequence is MNRTPIRRCK…STVTPIQQKI (84 aa). Over residues 43–55 the composition is skewed to low complexity; that stretch reads STSPQSPSSSTEN. The Helicase ATP-binding domain occupies 178 to 349; that stretch reads DKRLLDGENC…ALRAFVYSTN (172 aa). 191–198 is a binding site for ATP; the sequence is LPTGAGKT. Positions 295–298 match the DEAH box motif; sequence DELH. The 205-residue stretch at 392 to 596 folds into the Helicase C-terminal domain; sequence GICQLLAKLI…CVVLKLAENI (205 aa).

Belongs to the helicase family. SKI2 subfamily.

It is found in the nucleus. The protein resides in the chromosome. It catalyses the reaction Couples ATP hydrolysis with the unwinding of duplex DNA by translocating in the 3'-5' direction.. The catalysed reaction is ATP + H2O = ADP + phosphate + H(+). In terms of biological role, single-stranded 3'-5' DNA helicase that plays a key role in homology-driven double-strand break (DSB) repair. Involved in different DSB repair mechanisms that are guided by annealing of extensive stretches of complementary bases at break ends, such as microhomology-mediated end-joining (MMEJ), single-strand annealing (SSA) or synthesis-dependent strand annealing (SDSA). The protein is Helicase POLQ-like of Caenorhabditis elegans.